Consider the following 364-residue polypeptide: Cobalt-precorrin-5B C(1)-methyltransferase (364 aa).

The protein belongs to the CbiD family.

The catalysed reaction is Co-precorrin-5B + S-adenosyl-L-methionine = Co-precorrin-6A + S-adenosyl-L-homocysteine. It participates in cofactor biosynthesis; adenosylcobalamin biosynthesis; cob(II)yrinate a,c-diamide from sirohydrochlorin (anaerobic route): step 6/10. Catalyzes the methylation of C-1 in cobalt-precorrin-5B to form cobalt-precorrin-6A. The chain is Cobalt-precorrin-5B C(1)-methyltransferase from Pseudomonas putida (strain W619).